We begin with the raw amino-acid sequence, 278 residues long: Cysteine-rich repeat secretory protein 18 (278 aa).

A signal peptide spans 1-32 (MYSSSSVSKRFVLVPIVVVVTTQLLLVRNVSS). 2 consecutive Gnk2-homologous domains span residues 39 to 147 (YLHH…SLDT) and 160 to 267 (PSAK…LYPF).

Belongs to the cysteine-rich repeat secretory protein family.

The protein resides in the secreted. The chain is Cysteine-rich repeat secretory protein 18 (CRRSP18) from Arabidopsis thaliana (Mouse-ear cress).